A 373-amino-acid polypeptide reads, in one-letter code: MASFLVLAFSLAFVSQTTANYFYSSPPPPVKHYSPPPVYKSPPPPVKHYSPPPVYKSPPPPVKHYSPPPVYKSPPPPVKYYSPPPVYKSPPPPVYKSPPPPVKHYSPPPVYKSPPPPVKHYSPPPVYKSPPPPVKHYSPPPVYKSPPPPVKHYSPPPVYKSPPPPVKYYSPPPVYKSPPPPVKHYSPPPVYKSPPPPVKYYSPPPVYKSPPPPVKHYSPPPVYKSPPPPVKYYSPPPVYKSPPPPVHYSPPPVVYHSPPPPVHYSPPPVVYHSPPPPVHYSPPPVVYHSPPPPVHYSPPPVVYHSPPPPVHYSPPPVVYHSPPPPKKHYEYKSPPPPVHYSPPTVYHSPPPPVHHYSPPHQPYLYKSPPPPHY.

Positions 1–19 (MASFLVLAFSLAFVSQTTA) are cleaved as a signal peptide. Repeat copies occupy residues 25-33 (SPPPPVKHY), 34-40 (SPPPVYK), 41-49 (SPPPPVKHY), 50-56 (SPPPVYK), 57-65 (SPPPPVKHY), 66-72 (SPPPVYK), 73-81 (SPPPPVKYY), 82-88 (SPPPVYK), 97-105 (SPPPPVKHY), 106-112 (SPPPVYK), 113-121 (SPPPPVKHY), 122-128 (SPPPVYK), 129-137 (SPPPPVKHY), 138-144 (SPPPVYK), 145-153 (SPPPPVKHY), 154-160 (SPPPVYK), 161-169 (SPPPPVKYY), 170-176 (SPPPVYK), 177-185 (SPPPPVKHY), 186-192 (SPPPVYK), 193-201 (SPPPPVKYY), 202-208 (SPPPVYK), 209-217 (SPPPPVKHY), 218-224 (SPPPVYK), 225-233 (SPPPPVKYY), 234-240 (SPPPVYK), 241-248 (SPPPPVHY), 249-256 (SPPPVVYH), 257-264 (SPPPPVHY), 265-272 (SPPPVVYH), 273-280 (SPPPPVHY), 281-288 (SPPPVVYH), 289-296 (SPPPPVHY), 297-304 (SPPPVVYH), 305-312 (SPPPPVHY), and 313-320 (SPPPVVYH). The 13 X 9 AA repeats of S-P-P-P-P-V-K-[HY]-Y stretch occupies residues 25 to 233 (SPPPPVKHYS…KSPPPPVKYY (209 aa)). Positions 34-240 (SPPPVYKSPP…KYYSPPPVYK (207 aa)) are 13 X 7 AA repeats of S-P-P-P-V-Y-K. The 5 X 8 AA repeats of S-P-P-P-P-V-H-Y stretch occupies residues 241-312 (SPPPPVHYSP…YHSPPPPVHY (72 aa)). A 5 X 8 AA repeats of S-P-P-P-V-V-Y-H region spans residues 249–320 (SPPPVVYHSP…HYSPPPVVYH (72 aa)). Isodityrosine cross-linking stretches follow at residues 329–332 (YEYK) and 363–366 (YLYK). Residues 349 to 373 (PPPPVHHYSPPHQPYLYKSPPPPHY) are disordered.

This sequence belongs to the extensin family. In terms of processing, extensins contain a characteristic repeat of the pentapeptide Ser-Pro(4). For this particular extensin, a typical repeat of Ser-Pro(3) is found. In both cases, the proline residues are hydroxylated and then O-glycosylated (arabinosylation). Post-translationally, synthetised as soluble proteins which become insolubilised in the cell wall through the intermolecular cross-linking of Tyr on adjacent monomers. Isodityrosine (IDT) stabilizes and makes rigid the part of the polypeptide where IDT functional sites are present. In terms of tissue distribution, predominantly expressed in the roots. Not detected in the leaves, nor in flowers or flower buds. Wounding reverses this pattern, turning on the gene in the leaves and repressing it in the roots.

The protein resides in the secreted. It is found in the primary cell wall. Functionally, structural component which strengthens the primary cell wall. This Arabidopsis thaliana (Mouse-ear cress) protein is Extensin-1.